The chain runs to 152 residues: UPF0178 protein NIS_0137 (152 aa).

This sequence belongs to the UPF0178 family.

The chain is UPF0178 protein NIS_0137 from Nitratiruptor sp. (strain SB155-2).